The primary structure comprises 271 residues: Aspartate/glutamate leucyltransferase (271 aa).

It belongs to the R-transferase family. Bpt subfamily.

The protein resides in the cytoplasm. The catalysed reaction is N-terminal L-glutamyl-[protein] + L-leucyl-tRNA(Leu) = N-terminal L-leucyl-L-glutamyl-[protein] + tRNA(Leu) + H(+). The enzyme catalyses N-terminal L-aspartyl-[protein] + L-leucyl-tRNA(Leu) = N-terminal L-leucyl-L-aspartyl-[protein] + tRNA(Leu) + H(+). Its function is as follows. Functions in the N-end rule pathway of protein degradation where it conjugates Leu from its aminoacyl-tRNA to the N-termini of proteins containing an N-terminal aspartate or glutamate. The protein is Aspartate/glutamate leucyltransferase of Acinetobacter baumannii (strain SDF).